Consider the following 359-residue polypeptide: E3 ubiquitin-protein ligase RNF146 (359 aa).

An RING-type zinc finger spans residues 37–75 (CAICLQTCVHPVSLPCKHVFCYLCVKGASWLGKRCALCR). Residues K85 and K95 each participate in a glycyl lysine isopeptide (Lys-Gly) (interchain with G-Cter in ubiquitin) cross-link. Positions 92 to 168 (EELKAASRGN…EHGRRRKIKR (77 aa)) constitute a WWE domain. Y108, R111, and W115 together coordinate a glycoprotein. K131 participates in a covalent cross-link: Glycyl lysine isopeptide (Lys-Gly) (interchain with G-Cter in ubiquitin). Positions 145, 154, 164, and 176 each coordinate a glycoprotein. A Glycyl lysine isopeptide (Lys-Gly) (interchain with G-Cter in ubiquitin) cross-link involves residue K176. Residues 254-359 (GDNTAERSHR…PDGQCTVTEV (106 aa)) form a disordered region. The span at 284–298 (SIEETESDASSDSED) shows a compositional bias: acidic residues. 2 positions are modified to phosphoserine: S290 and S294. Over residues 306-323 (HSLTQQRLLVSNANQTVP) the composition is skewed to polar residues.

As to quaternary structure, can form homooligomers. Interacts with PARsylated AXIN1, AXIN2, BLZF1, CASC3, H1-2, IPO7, LIG3, NCL, PARP1, XRCC1, XRCC5 and XRCC6. Interacts with DDB1, DHX15, IQGAP1, LRPPRC, PARP2, PRKDC, RUVBL2, TNKS1 and TNKS2. Binding often leads to interactor ubiquitination, in the presence of the appropriate E1 and E2 enzymes, and proteasomal degradation. Ubiquitinated; autoubiquitinated. Polyubiquitinated in the presence of UBE2D1, UBE2D2 and UBE2D3. Multimonoubiquitinated in the presence of UBE2E1. Not ubiquitinated in the presence of UBE2H, CDC34, UBE2L3, UBE2L6, nor UBE2C. In the absence of PAR, autoubiquitination occurs on Lys-85, Lys-95 and Lys-176 via 'Lys-11' and 'Lys-48' ubiquitin linkages. In the presence of PAR, Lys-131 and Lys-176 are ubiquitinated via 'Lys-6', 'Lys-33' and 'Lys-48' ubiquitin linkages. Autoubiquitination is enhanced upon PAR-binding. Ubiquitously expressed. Up-regulated in brains from patients with Alzheimer disease.

It localises to the cytoplasm. It is found in the cytosol. Its subcellular location is the nucleus. It carries out the reaction S-ubiquitinyl-[E2 ubiquitin-conjugating enzyme]-L-cysteine + [acceptor protein]-L-lysine = [E2 ubiquitin-conjugating enzyme]-L-cysteine + N(6)-ubiquitinyl-[acceptor protein]-L-lysine.. It functions in the pathway protein modification; protein ubiquitination. Its function is as follows. E3 ubiquitin-protein ligase that specifically binds poly-ADP-ribosylated (PARsylated) proteins and mediates their ubiquitination and subsequent degradation. May regulate many important biological processes, such as cell survival and DNA damage response. Acts as an activator of the Wnt signaling pathway by mediating the ubiquitination of PARsylated AXIN1 and AXIN2, 2 key components of the beta-catenin destruction complex. Acts in cooperation with tankyrase proteins (TNKS and TNKS2), which mediate PARsylation of target proteins AXIN1, AXIN2, BLZF1, CASC3, TNKS and TNKS2. Recognizes and binds tankyrase-dependent PARsylated proteins via its WWE domain and mediates their ubiquitination, leading to their degradation. Different ubiquitin linkage types have been observed: TNKS2 undergoes ubiquitination at 'Lys-48' and 'Lys-63', while AXIN1 is only ubiquitinated at 'Lys-48'. May regulate TNKS and TNKS2 subcellular location, preventing aggregation at a centrosomal location. Neuroprotective protein. Protects the brain against N-methyl-D-aspartate (NMDA) receptor-mediated glutamate excitotoxicity and ischemia, by interfering with PAR-induced cell death, called parthanatos. Prevents nuclear translocation of AIFM1 in a PAR-binding dependent manner. Does not affect PARP1 activation. Protects against cell death induced by DNA damaging agents, such as N-methyl-N-nitro-N-nitrosoguanidine (MNNG) and rescues cells from G1 arrest. Promotes cell survival after gamma-irradiation. Facilitates DNA repair. This chain is E3 ubiquitin-protein ligase RNF146 (RNF146), found in Homo sapiens (Human).